The following is a 73-amino-acid chain: UPF0235 protein HY04AAS1_1378 (73 aa).

It belongs to the UPF0235 family.

The protein is UPF0235 protein HY04AAS1_1378 of Hydrogenobaculum sp. (strain Y04AAS1).